We begin with the raw amino-acid sequence, 119 residues long: UPF0102 protein Nmul_A0195 (119 aa).

It belongs to the UPF0102 family.

This Nitrosospira multiformis (strain ATCC 25196 / NCIMB 11849 / C 71) protein is UPF0102 protein Nmul_A0195.